The following is a 365-amino-acid chain: MDELPYEIWIQIIDLLENPFNMLVSNKYTLSMTKYLKNINSFFMIFVEQGNLSWVKILHSQGYDIRFQNNEALKIACKYGYLEIVKYLYDHGCDIFIDNNFCLKIASERGHLEIVKYLYQNGYKFSNDSKPILDIAAANGHFEIIKYVRLLNPNNINKNGCIRMCWKIDNYDISIISYYYTDNKFKDNIYRATEYGNIEIIKKTWNKFCGNITVSNNLFKIAVVYGHLNIIKYMFKKGHRFPRQSNELIQIACGKGYLDIVKYLHKKGFSIVDSLLNIAGRFGHHDVVEYLYKRLKNVNLQKVITITIENDYLEIVKFFVTKENNPDEIRTYLILAHKHGHNRIIRYFDSLLIMTQQKLQSNLEN.

ANK repeat units lie at residues 38–67, 68–97, 99–127, 129–158, 184–213, 214–243, 245–273, 275–298, 299–328, and 330–361; these read NINS…DIRF, QNNE…DIFI, NNFC…KFSN, SKPI…NINK, KFKD…GNIT, VSNN…RFPR, SNEL…SIVD, LLNI…LKNV, NLQK…NPDE, and RTYL…KLQS.

This Acanthamoeba polyphaga mimivirus (APMV) protein is Putative ankyrin repeat protein R903.